The primary structure comprises 442 residues: Small RNA 2'-O-methyltransferase (442 aa).

S-adenosyl-L-methionine is bound by residues glycine 125 and aspartate 151. Glutamate 209, glutamate 212, histidine 213, and histidine 260 together coordinate Mg(2+).

It belongs to the methyltransferase superfamily. HEN1 family. It depends on Mg(2+) as a cofactor. Broadly expressed in the germline and somatic tissues in both hermaphrodites and males.

Its subcellular location is the cytoplasm. The protein resides in the nucleus. The protein localises to the nucleoplasm. It localises to the cytoplasmic granule. The enzyme catalyses small RNA 3'-end nucleotide + S-adenosyl-L-methionine = small RNA 3'-end 2'-O-methylnucleotide + S-adenosyl-L-homocysteine + H(+). In terms of biological role, methyltransferase that adds a 2'-O-methyl group at the 3'-end of PIWI-interacting RNAs (piRNAs) and small interfering RNAs (siRNAs) which are classes of regulatory RNAs that are involved in gene silencing in endogenous RNA interference (RNAi) pathways. Methylation protects the 3'-end of small RNAs from tailing and trimming and could constitute a recognition signal for appropriate argonaute machineries. Methylates and stabilizes 26G-siRNAs (a class of 26 nucleotide siRNAs that possess a monophosphorylated guanine residue at the 5'-end) when they are bound by argonaute protein ergo-1. This occurs in the female germline and embryo, but not in the male germline. Does not methylate 26G-siRNAs bound by argonaute proteins alg-3 or alg-4. Methylates and stabilizes 21U-piRNAs, which are a class of 21 nucleotide piRNAs that possess a uracil residue at the 5'-end, in the male and female germline. In addition, may play a role in exogenous RNAi (exoRNAi) pathways in the germline. This Caenorhabditis elegans protein is Small RNA 2'-O-methyltransferase.